A 138-amino-acid polypeptide reads, in one-letter code: Large ribosomal subunit protein uL16c (138 aa).

This sequence belongs to the universal ribosomal protein uL16 family. In terms of assembly, part of the 50S ribosomal subunit.

Its subcellular location is the plastid. The protein localises to the chloroplast. This is Large ribosomal subunit protein uL16c from Tetradesmus obliquus (Green alga).